A 300-amino-acid polypeptide reads, in one-letter code: Quinolinate synthase (300 aa).

Positions 21 and 38 each coordinate iminosuccinate. Cys-83 contributes to the [4Fe-4S] cluster binding site. Residues 109-111 and Ser-126 each bind iminosuccinate; that span reads YVN. [4Fe-4S] cluster is bound at residue Cys-170. Residues 196–198 and Thr-213 contribute to the iminosuccinate site; that span reads HPE. Residue Cys-256 participates in [4Fe-4S] cluster binding.

Belongs to the quinolinate synthase family. Type 2 subfamily. As to quaternary structure, monomer. Homodimer. Requires [4Fe-4S] cluster as cofactor.

It localises to the cytoplasm. It catalyses the reaction iminosuccinate + dihydroxyacetone phosphate = quinolinate + phosphate + 2 H2O + H(+). It participates in cofactor biosynthesis; NAD(+) biosynthesis; quinolinate from iminoaspartate: step 1/1. Catalyzes the condensation of iminoaspartate with dihydroxyacetone phosphate to form quinolinate. The sequence is that of Quinolinate synthase from Pyrococcus horikoshii (strain ATCC 700860 / DSM 12428 / JCM 9974 / NBRC 100139 / OT-3).